We begin with the raw amino-acid sequence, 257 residues long: Ciliary microtubule associated protein 1B (257 aa).

STPGR repeat units follow at residues 103 to 129, 182 to 207, and 218 to 243; these read PGPG…LSAR, PGPG…MTGR, and PGPG…FGIR.

The protein belongs to the CIMAP family.

The protein localises to the cell projection. It is found in the cilium. It localises to the flagellum. The chain is Ciliary microtubule associated protein 1B (cimap1b) from Danio rerio (Zebrafish).